Here is a 181-residue protein sequence, read N- to C-terminus: Protein GrpE (181 aa).

A disordered region spans residues 1 to 21; it reads MNKEQQDLQTEQEAAVETAEL. A compositionally biased stretch (low complexity) spans 8-21; sequence LQTEQEAAVETAEL.

This sequence belongs to the GrpE family. In terms of assembly, homodimer.

Its subcellular location is the cytoplasm. Participates actively in the response to hyperosmotic and heat shock by preventing the aggregation of stress-denatured proteins, in association with DnaK and GrpE. It is the nucleotide exchange factor for DnaK and may function as a thermosensor. Unfolded proteins bind initially to DnaJ; upon interaction with the DnaJ-bound protein, DnaK hydrolyzes its bound ATP, resulting in the formation of a stable complex. GrpE releases ADP from DnaK; ATP binding to DnaK triggers the release of the substrate protein, thus completing the reaction cycle. Several rounds of ATP-dependent interactions between DnaJ, DnaK and GrpE are required for fully efficient folding. The sequence is that of Protein GrpE from Trichlorobacter lovleyi (strain ATCC BAA-1151 / DSM 17278 / SZ) (Geobacter lovleyi).